The primary structure comprises 352 residues: Quinolinate synthase (352 aa).

Iminosuccinate contacts are provided by H48 and S69. C114 is a [4Fe-4S] cluster binding site. Residues 140–142 (YAN) and S157 contribute to the iminosuccinate site. C201 is a binding site for [4Fe-4S] cluster. Residues 227–229 (HPE) and T244 each bind iminosuccinate. C298 contributes to the [4Fe-4S] cluster binding site.

Belongs to the quinolinate synthase family. Type 1 subfamily. Requires [4Fe-4S] cluster as cofactor.

The protein localises to the cytoplasm. The enzyme catalyses iminosuccinate + dihydroxyacetone phosphate = quinolinate + phosphate + 2 H2O + H(+). It participates in cofactor biosynthesis; NAD(+) biosynthesis; quinolinate from iminoaspartate: step 1/1. Functionally, catalyzes the condensation of iminoaspartate with dihydroxyacetone phosphate to form quinolinate. This chain is Quinolinate synthase, found in Pseudomonas putida (strain GB-1).